A 192-amino-acid chain; its full sequence is UPF0301 protein Bcep1808_0798 (192 aa).

It belongs to the UPF0301 (AlgH) family.

This is UPF0301 protein Bcep1808_0798 from Burkholderia vietnamiensis (strain G4 / LMG 22486) (Burkholderia cepacia (strain R1808)).